Consider the following 326-residue polypeptide: Beta-ketoacyl-[acyl-carrier-protein] synthase III (326 aa).

Catalysis depends on residues C112 and H251. An ACP-binding region spans residues 252–256 (QANSR). N281 is an active-site residue.

Belongs to the thiolase-like superfamily. FabH family. In terms of assembly, homodimer.

It localises to the cytoplasm. It catalyses the reaction malonyl-[ACP] + acetyl-CoA + H(+) = 3-oxobutanoyl-[ACP] + CO2 + CoA. Its pathway is lipid metabolism; fatty acid biosynthesis. Its function is as follows. Catalyzes the condensation reaction of fatty acid synthesis by the addition to an acyl acceptor of two carbons from malonyl-ACP. Catalyzes the first condensation reaction which initiates fatty acid synthesis and may therefore play a role in governing the total rate of fatty acid production. Possesses both acetoacetyl-ACP synthase and acetyl transacylase activities. Its substrate specificity determines the biosynthesis of branched-chain and/or straight-chain of fatty acids. The sequence is that of Beta-ketoacyl-[acyl-carrier-protein] synthase III from Clostridium botulinum (strain Langeland / NCTC 10281 / Type F).